The sequence spans 729 residues: Transcriptional activator ptaB (729 aa).

Pro residues predominate over residues 1-12; it reads MPQHPGLPPGHP. Disordered stretches follow at residues 1 to 69, 207 to 341, 505 to 538, and 614 to 729; these read MPQH…QAHA, AAAA…QNQA, LELSEQKQSPKVSKNLGKRAQQKQAQQAAPSLPE, and RGPQ…KGTA. A compositionally biased stretch (low complexity) spans 38–56; sequence PGGPQVTQGGPMMGMPPGA. Pro residues predominate over residues 272 to 285; that stretch reads APQPHPTPNPPPQQ. 2 stretches are compositionally biased toward low complexity: residues 286-300 and 307-341; these read LPQAQQPGQQPHQQP and QPQQQQSQQGQPQGQQQQMTPQEAQMKAQQTQNQA. The segment covering 614–625 has biased composition (polar residues); that stretch reads RGPQMNGPNQFA. The segment covering 655–671 has biased composition (low complexity); the sequence is GPPGMVQQGQMQPNVGQ. The segment covering 672 to 682 has biased composition (polar residues); it reads ATSASASPQVT.

This sequence belongs to the MFG1 family. As to quaternary structure, interacts with somA.

Its subcellular location is the nucleus. Transcriptional regulator that forms a complex with somA to control biofilm formation. The chain is Transcriptional activator ptaB from Aspergillus fumigatus (strain ATCC MYA-4609 / CBS 101355 / FGSC A1100 / Af293) (Neosartorya fumigata).